Here is a 99-residue protein sequence, read N- to C-terminus: uncharacterized protein (99 aa).

Residues 50-77 (SAHWEDARSSGGTSPIRARAGSEGRGCQ) are disordered.

This is an uncharacterized protein from Homo sapiens (Human).